The primary structure comprises 360 residues: G-protein coupled receptor 15 (360 aa).

Topologically, residues 1–33 are extracellular; the sequence is MDPEETSVYLDYYYATSPNPDIRETHSHVPYTS. A helical transmembrane segment spans residues 34-54; sequence VFLPVFYTAVFLTGVLGNLVL. Residues 55–69 are Cytoplasmic-facing; that stretch reads MGALHFKPGSRRLID. Residues 70–90 form a helical membrane-spanning segment; the sequence is IFIINLAASDFIFLVTLPLWV. Over 91 to 120 the chain is Extracellular; sequence DKEASLGLWRTGSFLCKGSSYMISVNMHCS. Residues 121-141 form a helical membrane-spanning segment; it reads VFLLTCMSVDRYLAIVCPVVS. Topologically, residues 142–149 are cytoplasmic; it reads RKFRRTDC. The helical transmembrane segment at 150-170 threads the bilayer; that stretch reads AYVVCASIWFISCLLGLPTLL. Residues 171–192 lie on the Extracellular side of the membrane; that stretch reads SRELTLIDDKPYCAEKKATPLK. The chain crosses the membrane as a helical span at residues 193–213; sequence LIWSLVALIFTFFVPLLSIVT. Topologically, residues 214 to 239 are cytoplasmic; sequence CYCCIARKLCAHYQQSGKHNKKLKKS. Residues 240–260 traverse the membrane as a helical segment; that stretch reads IKIIFIVVAAFLVSWLPFNTS. Over 261–284 the chain is Extracellular; sequence KLLAIVSGLQQERYFPSAILQLGM. A helical membrane pass occupies residues 285–305; sequence EVSGPLAFANSCVNPFIYYIF. Residues 306-360 are Cytoplasmic-facing; sequence DSYIRRAIVHCLCPCLKNYDFGSSTETSDSHLTKALSTFIHAEDFTRRRKRSVSL. Ser-359 is subject to Phosphoserine.

This sequence belongs to the G-protein coupled receptor 1 family. As to quaternary structure, interacts with adapter YWHAE; this interaction promotes ER-to-Golgi transport of GPR15. Phosphorylation is necessary for YWHAE binding and efficient surface expression. Post-translationally, O-glycosylated. Sialylated O-glycans in the N-terminal tail inhibits binding of GPR15LG. In terms of processing, sulfation is required for efficient binding of GPR15LG.

The protein localises to the cell membrane. Its function is as follows. G protein-coupled receptor that plays an important role in immune homeostasis. Acts via its natural ligand GPR15LG, a chemokine-like polypeptide strongly expressed in gastrointestinal tissues. GPR15-GPR15LG signaling axis regulates intestinal homeostasis and inflammation through the migration of immune cells. Controls thereby the specific homing of T-cells, particularly FOXP3+ regulatory T-cells (Tregs), to the large intestine lamina propria. Also required for skin localization of thymus-derived dendritic epidermal T-cells. Plays an important role in mediating cytoprotective function as well as angiogenesis of thrombomodulin. Mechanistically, preferentially signals through the Gi/o pathway to inhibit adenylate cyclase activity and activate a phosphatidylinositol-calcium second messenger system that regulates the release of Ca(2+) ions from intracellular stores. The sequence is that of G-protein coupled receptor 15 (GPR15) from Macaca nemestrina (Pig-tailed macaque).